Consider the following 143-residue polypeptide: Putative transmembrane protein ORF32 (143 aa).

2 consecutive transmembrane segments (helical) span residues 20–42 and 52–74; these read GISG…SFTL and WPLI…EGGV.

Its subcellular location is the host membrane. The chain is Putative transmembrane protein ORF32 from Haloarcula hispanica (His1V).